Here is a 312-residue protein sequence, read N- to C-terminus: DNA-directed RNA polymerase subunit alpha (312 aa).

An alpha N-terminal domain (alpha-NTD) region spans residues 1–226 (MIEFEKPIIT…EHLNLFTDLT (226 aa)). The interval 243–312 (DEKVLDRTIE…DLGLGLKNDK (70 aa)) is alpha C-terminal domain (alpha-CTD).

Belongs to the RNA polymerase alpha chain family. Homodimer. The RNAP catalytic core consists of 2 alpha, 1 beta, 1 beta' and 1 omega subunit. When a sigma factor is associated with the core the holoenzyme is formed, which can initiate transcription.

It carries out the reaction RNA(n) + a ribonucleoside 5'-triphosphate = RNA(n+1) + diphosphate. Functionally, DNA-dependent RNA polymerase catalyzes the transcription of DNA into RNA using the four ribonucleoside triphosphates as substrates. This is DNA-directed RNA polymerase subunit alpha from Streptococcus pyogenes serotype M1.